We begin with the raw amino-acid sequence, 279 residues long: MRISPSEAAMKLSLSPPPYADAPVVVLISGLGGSGSYWLPQLAVLEQEYQVVCYDQRGTGNNPDTLAEDYSIAQMAAELHQALVAAGIKRYAVVGHALGALVGMQLALDYPASVTMLVSVNGWLRINAHTRRCFQVREQLLHSGGAQAWVEAQPLFLYPADWMAARAPRLEAEDALALAHFQGKNNLLRRLNALKRADFSHHADRIRCPVQIICASDDLLVPSACSSELHAALPDSQKMVMRYGGHACNVTHPETFNALLLNGLASLLHHREAACKELL.

Positions 23-126 (PVVVLISGLG…LVSVNGWLRI (104 aa)) constitute an AB hydrolase-1 domain.

The protein belongs to the AB hydrolase superfamily. Hydrolase RutD family.

The enzyme catalyses carbamate + 2 H(+) = NH4(+) + CO2. In terms of biological role, involved in pyrimidine catabolism. May facilitate the hydrolysis of carbamate, a reaction that can also occur spontaneously. The sequence is that of Putative carbamate hydrolase RutD from Escherichia coli O17:K52:H18 (strain UMN026 / ExPEC).